We begin with the raw amino-acid sequence, 311 residues long: tRNA-cytidine(32) 2-sulfurtransferase (311 aa).

Positions 47–52 match the PP-loop motif motif; it reads SGGKDS. Positions 122, 125, and 213 each coordinate [4Fe-4S] cluster.

The protein belongs to the TtcA family. As to quaternary structure, homodimer. Mg(2+) serves as cofactor. [4Fe-4S] cluster is required as a cofactor.

It localises to the cytoplasm. The catalysed reaction is cytidine(32) in tRNA + S-sulfanyl-L-cysteinyl-[cysteine desulfurase] + AH2 + ATP = 2-thiocytidine(32) in tRNA + L-cysteinyl-[cysteine desulfurase] + A + AMP + diphosphate + H(+). The protein operates within tRNA modification. In terms of biological role, catalyzes the ATP-dependent 2-thiolation of cytidine in position 32 of tRNA, to form 2-thiocytidine (s(2)C32). The sulfur atoms are provided by the cysteine/cysteine desulfurase (IscS) system. This is tRNA-cytidine(32) 2-sulfurtransferase from Enterobacter sp. (strain 638).